The following is a 142-amino-acid chain: Hemoglobin subunit alpha (142 aa).

A Globin domain is found at 2-142 (VLSADDKANI…VSTVLTSKYR (141 aa)). Serine 4 bears the Phosphoserine mark. An N6-succinyllysine mark is found at lysine 8 and lysine 12. Lysine 17 carries the post-translational modification N6-acetyllysine; alternate. Lysine 17 is subject to N6-succinyllysine; alternate. A Phosphotyrosine modification is found at tyrosine 25. Serine 36 carries the phosphoserine modification. Lysine 41 bears the N6-succinyllysine mark. Serine 50 carries the post-translational modification Phosphoserine. Position 59 (histidine 59) interacts with O2. Position 88 (histidine 88) interacts with heme b. Position 109 is a phosphothreonine (threonine 109). Residues serine 125 and serine 132 each carry the phosphoserine modification. Threonine 135 and threonine 138 each carry phosphothreonine. A Phosphoserine modification is found at serine 139.

It belongs to the globin family. In terms of assembly, heterotetramer of two alpha chains and two beta chains. Red blood cells.

Involved in oxygen transport from the lung to the various peripheral tissues. Its function is as follows. Hemopressin acts as an antagonist peptide of the cannabinoid receptor CNR1. Hemopressin-binding efficiently blocks cannabinoid receptor CNR1 and subsequent signaling. In Cricetomys gambianus (Northern giant pouched rat), this protein is Hemoglobin subunit alpha (HBA).